Here is a 560-residue protein sequence, read N- to C-terminus: MSPPVAGAASSGDGPPGRPPRELYTIPASSGWFQWDEIHETERRALPEFFGGAGGSGFGTASRNPRIYREYRDYIISRYREDTSRRLTFTEVRKALVGDVTLLRKLFAFLDSSGLINFSASPSRPEAQQQQRQTEAEAVVEAPVGLQVTPRPPPSYFAEEKGGGGNENGFRLPPLTSYSDVFGEWAPGMAPICGLCGMECRDGNAQILKDGFKVCSKCYANNDNKGEANIHPGDKKERIDNHSSSAWTDAETLLLLEGVLKHGDDWDLIAQHVRTKNKSECIARLIQLPFGEHMLGTVNGKLDNRLHKIQTTDGKVNKSTVKESSSQPTETVDDMQIDGNEDGADKSVEEHPTKHRRLFSSIDITVSLMEQLAHLTTSTSPDVVAAAADAAIKALGNENPQARRAFQLSEKEYQTRAFSSNHARQSDDVGGGDRDVEMHGHPDKKQGKMFISTTYQVRAAVATSIGVAAARAKMLADQEEREMELLMASIIETQLKKIQYKIKHFEELELIMDQEYATLQQMKSSLVDEWQKVLKRAFETGVPISRDEVLIKLFQNKPNL.

The span at 1-13 (MSPPVAGAASSGD) shows a compositional bias: low complexity. A disordered region spans residues 1 to 22 (MSPPVAGAASSGDGPPGRPPRE). One can recognise an SWIRM domain in the interval 24-127 (YTIPASSGWF…FSASPSRPEA (104 aa)). The SANT domain occupies 242–293 (HSSSAWTDAETLLLLEGVLKHGDDWDLIAQHVRTKNKSECIARLIQLPFGEH). The segment covering 311–330 (TTDGKVNKSTVKESSSQPTE) has biased composition (polar residues). Disordered regions lie at residues 311–352 (TTDG…EEHP) and 414–445 (QTRA…PDKK). The segment covering 331–342 (TVDDMQIDGNED) has biased composition (acidic residues). Composition is skewed to basic and acidic residues over residues 343–352 (GADKSVEEHP) and 424–445 (RQSD…PDKK).

In terms of assembly, interacts with LFR.

The protein localises to the nucleus. In terms of biological role, component of a multiprotein complex equivalent of the SWI/SNF complex, an ATP-dependent chromatin-remodeling complex, which is required for the positive and negative regulation of gene expression of a large number of genes. It changes chromatin structure by altering DNA-histone contacts within a nucleosome, leading eventually to a change in nucleosome position, thus facilitating or repressing binding of gene-specific transcription factors. This chain is SWI/SNF complex subunit SWI3A homolog, found in Oryza sativa subsp. japonica (Rice).